A 408-amino-acid polypeptide reads, in one-letter code: LL-diaminopimelate aminotransferase (408 aa).

The substrate site is built by Tyr-15 and Gly-42. Pyridoxal 5'-phosphate is bound by residues Tyr-72, Ser-108 to Lys-109, Tyr-132, Asn-187, Tyr-218, and Ser-246 to Ser-248. Substrate contacts are provided by Lys-109, Tyr-132, and Asn-187. Lys-249 carries the N6-(pyridoxal phosphate)lysine modification. Arg-257 and Asn-292 together coordinate pyridoxal 5'-phosphate. Substrate is bound by residues Asn-292 and Arg-388.

Belongs to the class-I pyridoxal-phosphate-dependent aminotransferase family. LL-diaminopimelate aminotransferase subfamily. As to quaternary structure, homodimer. Requires pyridoxal 5'-phosphate as cofactor.

The enzyme catalyses (2S,6S)-2,6-diaminopimelate + 2-oxoglutarate = (S)-2,3,4,5-tetrahydrodipicolinate + L-glutamate + H2O + H(+). It participates in amino-acid biosynthesis; L-lysine biosynthesis via DAP pathway; LL-2,6-diaminopimelate from (S)-tetrahydrodipicolinate (aminotransferase route): step 1/1. In terms of biological role, involved in the synthesis of meso-diaminopimelate (m-DAP or DL-DAP), required for both lysine and peptidoglycan biosynthesis. Catalyzes the direct conversion of tetrahydrodipicolinate to LL-diaminopimelate. This Parasynechococcus marenigrum (strain WH8102) protein is LL-diaminopimelate aminotransferase.